Consider the following 358-residue polypeptide: Protein RecA (358 aa).

Residue 78-85 participates in ATP binding; the sequence is GPESGGKT.

It belongs to the RecA family.

The protein localises to the cytoplasm. Its function is as follows. Can catalyze the hydrolysis of ATP in the presence of single-stranded DNA, the ATP-dependent uptake of single-stranded DNA by duplex DNA, and the ATP-dependent hybridization of homologous single-stranded DNAs. It interacts with LexA causing its activation and leading to its autocatalytic cleavage. The polypeptide is Protein RecA (Deinococcus geothermalis (strain DSM 11300 / CIP 105573 / AG-3a)).